The chain runs to 100 residues: Aspartyl/glutamyl-tRNA(Asn/Gln) amidotransferase subunit C (100 aa).

This sequence belongs to the GatC family. As to quaternary structure, heterotrimer of A, B and C subunits.

The enzyme catalyses L-glutamyl-tRNA(Gln) + L-glutamine + ATP + H2O = L-glutaminyl-tRNA(Gln) + L-glutamate + ADP + phosphate + H(+). The catalysed reaction is L-aspartyl-tRNA(Asn) + L-glutamine + ATP + H2O = L-asparaginyl-tRNA(Asn) + L-glutamate + ADP + phosphate + 2 H(+). Its function is as follows. Allows the formation of correctly charged Asn-tRNA(Asn) or Gln-tRNA(Gln) through the transamidation of misacylated Asp-tRNA(Asn) or Glu-tRNA(Gln) in organisms which lack either or both of asparaginyl-tRNA or glutaminyl-tRNA synthetases. The reaction takes place in the presence of glutamine and ATP through an activated phospho-Asp-tRNA(Asn) or phospho-Glu-tRNA(Gln). The sequence is that of Aspartyl/glutamyl-tRNA(Asn/Gln) amidotransferase subunit C from Streptococcus pyogenes serotype M49 (strain NZ131).